An 87-amino-acid chain; its full sequence is Kappa 1a-bungarotoxin (87 aa).

The signal sequence occupies residues Met1–Thr21. Disulfide bonds link Cys24-Cys42, Cys35-Cys63, Cys48-Cys52, Cys67-Cys79, and Cys80-Cys85.

This sequence belongs to the three-finger toxin family. Long-chain subfamily. Kappa-neurotoxin sub-subfamily. As to quaternary structure, homo- and heterodimer; non-covalently linked. In terms of tissue distribution, expressed by the venom gland.

It localises to the secreted. Postsynaptic neurotoxin that binds and inhibits neuronal nicotinic acetylcholine receptors (nAChR) with high affinity (IC(50)&lt;100 nM). Is a selective, and slowly reversible antagonist of alpha-3/CHRNA3-containing and some alpha-4/CHRNA4-containing AChRs. In Bungarus candidus (Malayan krait), this protein is Kappa 1a-bungarotoxin.